The chain runs to 376 residues: Putative endoglucanase type K (376 aa).

A signal peptide spans 1 to 18 (MRSYTLLALAGPLAVSAA). A catalytic region spans residues 19 to 308 (SGSGHSTRYW…ATKPAQPVNK (290 aa)). Catalysis depends on aspartate 29, which acts as the Nucleophile. Aspartate 140 (proton donor) is an active-site residue. Residues 229–332 (AFKGDTSASK…SCPAKTDATA (104 aa)) are disordered. 2 stretches are compositionally biased toward low complexity: residues 235–258 (SASK…AQPQ) and 291–306 (KPVA…AQPV). Positions 309-338 (PKTTQKVRGTKTRGSCPAKTDATAKASVVP) are linker. Residues 335–374 (SVVPAYYQCGGSKSAYPNGNLACATGSKCVKQNEYYSQCV) enclose the CBM1 domain.

Belongs to the glycosyl hydrolase 45 (cellulase K) family.

It catalyses the reaction Endohydrolysis of (1-&gt;4)-beta-D-glucosidic linkages in cellulose, lichenin and cereal beta-D-glucans.. The polypeptide is Putative endoglucanase type K (Fusarium oxysporum (Fusarium vascular wilt)).